Consider the following 150-residue polypeptide: MQLEPNFWQTKSLLEMTESEWEALCDGCGKCCYRKYIQGRGKRQKLYYTRIACNLLDLETGKCGNYSERFNIETDCTKLTKKNLPDFHWLPDTCAYRLLYEGKTLPEWHPLISGSPHSVKNADILIKNGIHERDVIDWFEFIIDEDHTFK.

It belongs to the UPF0260 family.

In Haemophilus influenzae (strain PittGG), this protein is UPF0260 protein CGSHiGG_00425.